A 279-amino-acid chain; its full sequence is Homeobox protein BarH-like 2 (279 aa).

Disordered regions lie at residues 110–137 (APGGEALASSESETEQPTPRQKKPRRSR) and 194–279 (KGGQ…PPLS). Positions 118 to 128 (SSESETEQPTP) are enriched in polar residues. Residues 133–192 (PRRSRTIFTELQLMGLEKKFQKQKYLSTPDRLDLAQSLGLTQLQVKTWYQNRRMKWKKMV) constitute a DNA-binding region (homeobox). The span at 225–240 (NSQAQGQEQLEPSQGQ) shows a compositional bias: polar residues. Positions 261-279 (PPDPPQELPIPSSEPPPLS) are enriched in pro residues.

It belongs to the BAR homeobox family. As to expression, highly expressed in adult salivary gland and at much lower levels in mammary gland, kidney and placenta.

It is found in the nucleus. Transcription factor. Binds optimally to the DNA consensus sequence 5'-YYTAATGRTTTTY-3'. May control the expression of neural adhesion molecules such as L1 or Ng-CAM during embryonic development of both the central and peripherical nervous system. May be involved in controlling adhesive processes in keratinizing epithelia. This is Homeobox protein BarH-like 2 (BARX2) from Homo sapiens (Human).